The chain runs to 401 residues: MKAVGIVVEYNPFHNGHLYHVQQTRKKTSADCVIAVMSSSFTQRGEPAIVPKWERARMALAGGVDLVVELPYPFAVQTAEWFAQGAVSILDALFCEQLCFGSEHGSIEPFIKTAQLLVYKKEQHNEKVKQYVRQGINYAKAYALALYDIGHDTLDVSQPNNILGLHYVKAIIEQRSNIKPETIQRIVAHYHDETLPVNDNIASATSIRRFLQVSDDDVARYVPHTTYETLQTYRHTYMTWHDWEKYFPFLKYRLLTMEVDDIQQIAEVEEGIEYRLKKAIIHATSFHDFLSAVKTKRYTWTRLQRICTHILTNVTKKEIAKAIESKRATYVRPLAMNETGRAYLQEVKKHMTLPLVTNAKHMRHDPIYQIEKKATQAYVSILPEPLCSEALQREYKTPPLR.

ATP contacts are provided by residues 7-20 (VVEY…HLYH), G101, N160, and 185-186 (RI).

Belongs to the TmcAL family.

The protein resides in the cytoplasm. It catalyses the reaction cytidine(34) in elongator tRNA(Met) + acetate + ATP = N(4)-acetylcytidine(34) in elongator tRNA(Met) + AMP + diphosphate. Functionally, catalyzes the formation of N(4)-acetylcytidine (ac(4)C) at the wobble position of elongator tRNA(Met), using acetate and ATP as substrates. First activates an acetate ion to form acetyladenylate (Ac-AMP) and then transfers the acetyl group to tRNA to form ac(4)C34. The protein is tRNA(Met) cytidine acetate ligase of Anoxybacillus flavithermus (strain DSM 21510 / WK1).